A 422-amino-acid polypeptide reads, in one-letter code: Enolase (422 aa).

Glutamine 162 serves as a coordination point for (2R)-2-phosphoglycerate. Glutamate 204 acts as the Proton donor in catalysis. 3 residues coordinate Mg(2+): aspartate 241, glutamate 284, and aspartate 311. Positions 336, 365, 366, and 387 each coordinate (2R)-2-phosphoglycerate. The active-site Proton acceptor is lysine 336.

Belongs to the enolase family. As to quaternary structure, component of the RNA degradosome, a multiprotein complex involved in RNA processing and mRNA degradation. Mg(2+) is required as a cofactor.

It localises to the cytoplasm. It is found in the secreted. Its subcellular location is the cell surface. The catalysed reaction is (2R)-2-phosphoglycerate = phosphoenolpyruvate + H2O. It functions in the pathway carbohydrate degradation; glycolysis; pyruvate from D-glyceraldehyde 3-phosphate: step 4/5. Catalyzes the reversible conversion of 2-phosphoglycerate (2-PG) into phosphoenolpyruvate (PEP). It is essential for the degradation of carbohydrates via glycolysis. In Legionella pneumophila (strain Paris), this protein is Enolase.